The sequence spans 311 residues: Ribonuclease HIII (311 aa).

In terms of domain architecture, RNase H type-2 spans 95-311 (MSIVGSDEVG…NTEKALRLLR (217 aa)). A divalent metal cation is bound by residues Asp-101, Glu-102, and Asp-206.

Belongs to the RNase HII family. RnhC subfamily. It depends on Mn(2+) as a cofactor. Mg(2+) serves as cofactor.

Its subcellular location is the cytoplasm. It catalyses the reaction Endonucleolytic cleavage to 5'-phosphomonoester.. Endonuclease that specifically degrades the RNA of RNA-DNA hybrids. The protein is Ribonuclease HIII of Bacillus cereus (strain ATCC 14579 / DSM 31 / CCUG 7414 / JCM 2152 / NBRC 15305 / NCIMB 9373 / NCTC 2599 / NRRL B-3711).